A 100-amino-acid chain; its full sequence is Small ribosomal subunit protein bS6 (100 aa).

This sequence belongs to the bacterial ribosomal protein bS6 family.

In terms of biological role, binds together with bS18 to 16S ribosomal RNA. The protein is Small ribosomal subunit protein bS6 of Tropheryma whipplei (strain Twist) (Whipple's bacillus).